Consider the following 381-residue polypeptide: Endolytic peptidoglycan transglycosylase RlpA (381 aa).

The N-terminal stretch at 1-19 (MRKQLPVICVAAGIVLLAA) is a signal peptide. The N-palmitoyl cysteine moiety is linked to residue cysteine 20. A lipid anchor (S-diacylglycerol cysteine) is attached at cysteine 20. Positions 196–274 (LPPRPDLSGG…QPAPVSAPVA (79 aa)) are disordered. The span at 208 to 218 (SASSAPAQPQG) shows a compositional bias: low complexity. Residues 304–380 (AAASGRFVVQ…AQLQSFIASA (77 aa)) form the SPOR domain.

This sequence belongs to the RlpA family.

It localises to the cell membrane. In terms of biological role, lytic transglycosylase with a strong preference for naked glycan strands that lack stem peptides. The polypeptide is Endolytic peptidoglycan transglycosylase RlpA (Salmonella typhimurium (strain LT2 / SGSC1412 / ATCC 700720)).